A 462-amino-acid chain; its full sequence is Metal cation symporter ZIP8 (462 aa).

An N-terminal signal peptide occupies residues 1–19 (MAPGRAVAGLLLLAATSLG). The Extracellular portion of the chain corresponds to 20 to 132 (HPSEGPELAF…PSLSEVWGYG (113 aa)). 3 N-linked (GlcNAc...) asparagine glycosylation sites follow: Asn-40, Asn-88, and Asn-96. The chain crosses the membrane as a helical span at residues 133–153 (FLSVTIINLASLLGLILTPLI). Residues 154-160 (KKSYFPK) are Cytoplasmic-facing. The helical transmembrane segment at 161–181 (ILTYFVGLAIGTLFSNAIFQL) threads the bilayer. The Extracellular portion of the chain corresponds to 182 to 191 (IPEAFGFNPK). The chain crosses the membrane as a helical span at residues 192 to 212 (IDNYVEKAVAVFGGFYMLFFV). Residues 213-367 (ERTLKMLLKT…LNAGMSTRQA (155 aa)) lie on the Cytoplasmic side of the membrane. The short motif at 345 to 350 (EEFPHE) is the XEXPHE-motif element. Residues 368–388 (LLFNFLSACSCYVGLAFGILV) form a helical membrane-spanning segment. Over 389-390 (GN) the chain is Extracellular. Residues 391-411 (NFAPNIIFALAGGMFLYISLA) traverse the membrane as a helical segment. Over 412–431 (DMFPEMNDMLREKVTGRQTD) the chain is Cytoplasmic. Residues 432–452 (FTFFMIQNAGMLTGFTAILLI) traverse the membrane as a helical segment. The Extracellular segment spans residues 453–462 (TLYAGDIELQ).

It belongs to the ZIP transporter (TC 2.A.5) family. Homodimer. Post-translationally, N-glycosylated. N-glycosylation is not required for proper iron and zinc transport. As to expression, ubiquitously expressed.

It is found in the cell membrane. Its subcellular location is the apical cell membrane. The protein resides in the basolateral cell membrane. The protein localises to the lysosome membrane. The enzyme catalyses Zn(2+)(out) + 2 hydrogencarbonate(out) = Zn(2+)(in) + 2 hydrogencarbonate(in). The catalysed reaction is selenite(out) + Zn(2+)(out) + hydrogencarbonate(out) = selenite(in) + Zn(2+)(in) + hydrogencarbonate(in). It catalyses the reaction Mn(2+)(out) + 2 hydrogencarbonate(out) = Mn(2+)(in) + 2 hydrogencarbonate(in). It carries out the reaction Cd(2+)(out) + 2 hydrogencarbonate(out) = Cd(2+)(in) + 2 hydrogencarbonate(in). The enzyme catalyses Fe(2+)(out) + 2 hydrogencarbonate(out) = Fe(2+)(in) + 2 hydrogencarbonate(in). The catalysed reaction is Co(2+)(out) + 2 hydrogencarbonate(out) = Co(2+)(in) + 2 hydrogencarbonate(in). Its function is as follows. Electroneutral divalent metal cation:bicarbonate symporter of the plasma membrane mediating the cellular uptake of zinc and manganese, two divalent metal cations important for development, tissue homeostasis and immunity. Transports an electroneutral complex composed of a divalent metal cation and two bicarbonate anions or alternatively a bicarbonate and a selenite anion. Thereby, it also contributes to the cellular uptake of selenium, an essential trace metal and micronutrient. Also imports cadmium a non-essential metal which is cytotoxic and carcinogenic. May also transport iron and cobalt through membranes. Through zinc import, indirectly regulates the metal-dependent transcription factor MTF1 and the expression of some metalloproteases involved in cartilage catabolism and also probably heart development. Also indirectly regulates the expression of proteins involved in cell morphology and cytoskeleton organization. Indirectly controls innate immune function and inflammatory response by regulating zinc cellular uptake which in turn modulates the expression of genes specific of these processes. Protects, for instance, cells from injury and death at the onset of inflammation. By regulating zinc influx into monocytes also directly modulates their adhesion to endothelial cells and arteries. Reclaims manganese from the bile at the apical membrane of hepatocytes, thereby regulating the activity of the manganese-dependent enzymes through the systemic levels of the nutrient. Also participates in manganese reabsorption in the proximal tubule of the kidney. By mediating the extracellular uptake of manganese by cells of the blood-brain barrier, may also play a role in the transport of the micronutrient to the brain. With manganese cellular uptake also participates in mitochondrial proper function. Finally, also probably functions intracellularly, translocating zinc from lysosome to cytosol to indirectly enhance the expression of specific genes during TCR-mediated T cell activation. In Mus musculus (Mouse), this protein is Metal cation symporter ZIP8.